Here is a 457-residue protein sequence, read N- to C-terminus: MAFRVSISTFGKSLRVRRVANVSAPLANASPFLRTGWAARPPGTNNGHGFRFTPACFITSDAFLSRLAKGKAETDDTHYHHPASVLPDSAEQLSLLVKDPDQPENSKVLRVAIIGAPNAGKSTLSNQLLGRKVFAVSKKVHTTRARALGVLTEDDTQIILLDTPGLTTPTKVKRHQLEKSLLEDPWNTVKEAGLVVVMVDVSDKWACNKLDFEVLKCLTQHPDVPAVLVLNKVDLLKSKSRLLEITADLTCGVVNGRKLQVRRVIKPPWAERRTDREARTSGSGDEEKPGGDVADGEGSEALSGLSKEQLRALKTQQGWAHFKDVFMVSAVDGEDVETLKRYLVVGAKPGSWQYHSDVLTDQTPEEICTNTVREKLLEYLPKEVPYTMTQAIDLWHDRENGELDIAVKLYVKKESHMKMVIGQAGQMVARIAREAGDDLSTVFLREVKLRLSVKVKN.

A mitochondrion-targeting transit peptide spans 1-18 (MAFRVSISTFGKSLRVRR). One can recognise an Era-type G domain in the interval 107–350 (KVLRVAIIGA…RYLVVGAKPG (244 aa)). The segment at 115–122 (GAPNAGKS) is G1. A GTP-binding site is contributed by 115–122 (GAPNAGKS). The segment at 141–145 (HTTRA) is G2. Residues 162–165 (DTPG) are G3. Residues 162–166 (DTPGL) and 231–234 (NKVD) each bind GTP. A G4 region spans residues 231-234 (NKVD). Basic and acidic residues predominate over residues 270 to 290 (AERRTDREARTSGSGDEEKPG). Positions 270–300 (AERRTDREARTSGSGDEEKPGGDVADGEGSE) are disordered. Positions 328-330 (VSA) are G5. Positions 376–457 (LLEYLPKEVP…KLRLSVKVKN (82 aa)) constitute a KH type-2 domain.

This sequence belongs to the TRAFAC class TrmE-Era-EngA-EngB-Septin-like GTPase superfamily. Era GTPase family.

It is found in the mitochondrion matrix. The protein resides in the mitochondrion inner membrane. Probable GTPase that plays a role in the mitochondrial ribosomal small subunit assembly. Specifically binds the 12S mitochondrial rRNA (12S mt-rRNA) to a 33 nucleotide section delineating the 3' terminal stem-loop region. May act as a chaperone that protects the 12S mt-rRNA on the 28S mitoribosomal subunit during ribosomal small subunit assembly. The sequence is that of GTPase Era, mitochondrial (eral1) from Salmo salar (Atlantic salmon).